We begin with the raw amino-acid sequence, 431 residues long: Enolase (431 aa).

Q167 is a binding site for (2R)-2-phosphoglycerate. Catalysis depends on E209, which acts as the Proton donor. Residues D246, E290, and D317 each coordinate Mg(2+). (2R)-2-phosphoglycerate is bound by residues K342, R371, S372, and K393. Residue K342 is the Proton acceptor of the active site.

This sequence belongs to the enolase family. As to quaternary structure, component of the RNA degradosome, a multiprotein complex involved in RNA processing and mRNA degradation. It depends on Mg(2+) as a cofactor.

It is found in the cytoplasm. The protein resides in the secreted. The protein localises to the cell surface. The catalysed reaction is (2R)-2-phosphoglycerate = phosphoenolpyruvate + H2O. It functions in the pathway carbohydrate degradation; glycolysis; pyruvate from D-glyceraldehyde 3-phosphate: step 4/5. Functionally, catalyzes the reversible conversion of 2-phosphoglycerate (2-PG) into phosphoenolpyruvate (PEP). It is essential for the degradation of carbohydrates via glycolysis. The polypeptide is Enolase (Enterobacter sp. (strain 638)).